The chain runs to 807 residues: ATP-binding cassette sub-family F member 1 (807 aa).

The tract at residues Met-1–Met-227 is disordered. Ser-22 carries the phosphoserine modification. The span at Lys-29 to Lys-39 shows a compositional bias: basic residues. The segment covering Val-47–Gln-65 has biased composition (basic and acidic residues). A compositionally biased stretch (basic residues) spans Gln-73 to Lys-85. Ser-106 carries the phosphoserine modification. Phosphoserine; by CK2 is present on residues Ser-110 and Ser-141. Positions Glu-148–Arg-161 are enriched in basic and acidic residues. Residue Ser-167 is modified to Phosphoserine. Residues Leu-197–Glu-207 show a composition bias toward acidic residues. The segment covering Ile-208–Met-227 has biased composition (basic and acidic residues). The ABC transporter 1 domain maps to Ile-266–Leu-510. Residue Gly-298 to Thr-305 coordinates ATP. The segment covering Lys-521 to Thr-542 has biased composition (basic and acidic residues). A disordered region spans residues Lys-521–Leu-564. Ser-557 bears the Phosphoserine mark. Residues Leu-587–Val-802 enclose the ABC transporter 2 domain. Gly-620–Ser-627 provides a ligand contact to ATP.

Belongs to the ABC transporter superfamily. ABCF family. EF3 subfamily. As to quaternary structure, interacts (via N-terminus) with EIF2S1; the interaction is independent of its phosphorylated status. Associates (via both ABC transporter domains) with the ribosomes. Phosphorylated at phosphoserine and phosphothreonine. Phosphorylation on Ser-110 and Ser-141 by CK2; inhibits association of EIF2 with ribosomes.

The protein resides in the cytoplasm. The protein localises to the nucleus. It is found in the nucleoplasm. It localises to the nucleus envelope. Functionally, required for efficient Cap- and IRES-mediated mRNA translation initiation. Not involved in the ribosome biogenesis. The polypeptide is ATP-binding cassette sub-family F member 1 (ABCF1) (Sus scrofa (Pig)).